The chain runs to 230 residues: 2,3-bisphosphoglycerate-dependent phosphoglycerate mutase (230 aa).

Substrate contacts are provided by residues 8 to 15 (RHGESEWN), 21 to 22 (TG), arginine 60, 87 to 90 (ERHY), lysine 98, 114 to 115 (RR), and 183 to 184 (GN). Histidine 9 acts as the Tele-phosphohistidine intermediate in catalysis. The active-site Proton donor/acceptor is the glutamate 87.

This sequence belongs to the phosphoglycerate mutase family. BPG-dependent PGAM subfamily.

The enzyme catalyses (2R)-2-phosphoglycerate = (2R)-3-phosphoglycerate. Its pathway is carbohydrate degradation; glycolysis; pyruvate from D-glyceraldehyde 3-phosphate: step 3/5. In terms of biological role, catalyzes the interconversion of 2-phosphoglycerate and 3-phosphoglycerate. This is 2,3-bisphosphoglycerate-dependent phosphoglycerate mutase from Streptococcus pneumoniae (strain ATCC BAA-255 / R6).